A 513-amino-acid chain; its full sequence is Sterol 14-alpha demethylase rstn2 (513 aa).

A helical membrane pass occupies residues 3–23 (WPLIGAYALLAFVAIIALNVT). Cysteine 453 lines the heme pocket.

Belongs to the cytochrome P450 family. It depends on heme as a cofactor.

The protein resides in the membrane. The catalysed reaction is a 14alpha-methyl steroid + 3 reduced [NADPH--hemoprotein reductase] + 3 O2 = a Delta(14) steroid + formate + 3 oxidized [NADPH--hemoprotein reductase] + 4 H2O + 4 H(+). It catalyses the reaction a 14alpha-methyl steroid + reduced [NADPH--hemoprotein reductase] + O2 = a 14alpha-hydroxymethyl steroid + oxidized [NADPH--hemoprotein reductase] + H2O + H(+). The enzyme catalyses a 14alpha-hydroxymethyl steroid + reduced [NADPH--hemoprotein reductase] + O2 = a 14alpha-formyl steroid + oxidized [NADPH--hemoprotein reductase] + 2 H2O + H(+). It carries out the reaction a 14alpha-formyl steroid + reduced [NADPH--hemoprotein reductase] + O2 = a Delta(14) steroid + formate + oxidized [NADPH--hemoprotein reductase] + H2O + 2 H(+). The catalysed reaction is lanosterol + 3 reduced [NADPH--hemoprotein reductase] + 3 O2 = 4,4-dimethyl-5alpha-cholesta-8,14,24-trien-3beta-ol + formate + 3 oxidized [NADPH--hemoprotein reductase] + 4 H2O + 4 H(+). It catalyses the reaction lanosterol + reduced [NADPH--hemoprotein reductase] + O2 = 32-hydroxylanosterol + oxidized [NADPH--hemoprotein reductase] + H2O + H(+). The enzyme catalyses 32-hydroxylanosterol + reduced [NADPH--hemoprotein reductase] + O2 = 32-oxolanosterol + oxidized [NADPH--hemoprotein reductase] + 2 H2O + H(+). It carries out the reaction 32-oxolanosterol + reduced [NADPH--hemoprotein reductase] + O2 = 4,4-dimethyl-5alpha-cholesta-8,14,24-trien-3beta-ol + formate + oxidized [NADPH--hemoprotein reductase] + H2O + 2 H(+). The catalysed reaction is eburicol + 3 reduced [NADPH--hemoprotein reductase] + 3 O2 = 14-demethyleburicol + formate + 3 oxidized [NADPH--hemoprotein reductase] + 4 H2O + 4 H(+). It catalyses the reaction eburicol + reduced [NADPH--hemoprotein reductase] + O2 = 32-hydroxyeburicol + oxidized [NADPH--hemoprotein reductase] + H2O + H(+). The enzyme catalyses 32-hydroxyeburicol + reduced [NADPH--hemoprotein reductase] + O2 = 32-oxoeburicol + oxidized [NADPH--hemoprotein reductase] + 2 H2O + H(+). It carries out the reaction 32-oxoeburicol + reduced [NADPH--hemoprotein reductase] + O2 = 14-demethyleburicol + formate + oxidized [NADPH--hemoprotein reductase] + H2O + 2 H(+). The protein operates within steroid biosynthesis; sterol biosynthesis. In terms of biological role, sterol 14-alpha demethylase; part of the gene cluster that mediates the biosynthesis of the tetrahydropyranyl antifungal agent restricticin that acts as an inhibitor of CYP51 and blocks the ergosterol biosynthesis. Sterol 14-alpha-demethylase plays a critical role in the biosynthesis of ergosterol, the major sterol component in fungal membranes that participates in a variety of functions. Rtsn2 acts as a self-resistant CYP51 that contains mutations found in CYP51s isolated from azole resistance strains and that is not inhibited by the final product of the cluster, restricticin. This chain is Sterol 14-alpha demethylase rstn2, found in Aspergillus nomiae NRRL (strain ATCC 15546 / NRRL 13137 / CBS 260.88 / M93).